The primary structure comprises 212 residues: Thiamine-phosphate synthase (212 aa).

4-amino-2-methyl-5-(diphosphooxymethyl)pyrimidine-binding positions include 43–47 and asparagine 75; that span reads QYRNK. Positions 76 and 95 each coordinate Mg(2+). 4-amino-2-methyl-5-(diphosphooxymethyl)pyrimidine is bound at residue serine 114. 141 to 143 serves as a coordination point for 2-[(2R,5Z)-2-carboxy-4-methylthiazol-5(2H)-ylidene]ethyl phosphate; sequence SMT. Lysine 144 lines the 4-amino-2-methyl-5-(diphosphooxymethyl)pyrimidine pocket. Glycine 171 contacts 2-[(2R,5Z)-2-carboxy-4-methylthiazol-5(2H)-ylidene]ethyl phosphate.

This sequence belongs to the thiamine-phosphate synthase family. Mg(2+) is required as a cofactor.

The enzyme catalyses 2-[(2R,5Z)-2-carboxy-4-methylthiazol-5(2H)-ylidene]ethyl phosphate + 4-amino-2-methyl-5-(diphosphooxymethyl)pyrimidine + 2 H(+) = thiamine phosphate + CO2 + diphosphate. The catalysed reaction is 2-(2-carboxy-4-methylthiazol-5-yl)ethyl phosphate + 4-amino-2-methyl-5-(diphosphooxymethyl)pyrimidine + 2 H(+) = thiamine phosphate + CO2 + diphosphate. It carries out the reaction 4-methyl-5-(2-phosphooxyethyl)-thiazole + 4-amino-2-methyl-5-(diphosphooxymethyl)pyrimidine + H(+) = thiamine phosphate + diphosphate. The protein operates within cofactor biosynthesis; thiamine diphosphate biosynthesis; thiamine phosphate from 4-amino-2-methyl-5-diphosphomethylpyrimidine and 4-methyl-5-(2-phosphoethyl)-thiazole: step 1/1. Condenses 4-methyl-5-(beta-hydroxyethyl)thiazole monophosphate (THZ-P) and 2-methyl-4-amino-5-hydroxymethyl pyrimidine pyrophosphate (HMP-PP) to form thiamine monophosphate (TMP). This Nitrosomonas eutropha (strain DSM 101675 / C91 / Nm57) protein is Thiamine-phosphate synthase.